A 463-amino-acid chain; its full sequence is Dopaminechrome tautomerase (463 aa).

This sequence belongs to the major royal jelly protein family.

The protein localises to the secreted. It catalyses the reaction dopaminechrome = 5,6-dihydroxyindole. It participates in pigment biosynthesis; melanin biosynthesis. Its function is as follows. Catalyzes the conversion of dopaminechrome to 5,6-dihydroxyindole in the eumelanin biosynthetic pathway originating from dopamine. Catalyzes tautomerization of dopaminechrome to 5,6-dihydroxyindole during eumelanin biosynthesis. Acts both dopaminechrome and N-methyl dopaminechrome but not on dopachrome or other aminochromes tested. This chain is Dopaminechrome tautomerase, found in Drosophila melanogaster (Fruit fly).